The following is a 430-amino-acid chain: tRNA(Ile)-lysidine synthase (430 aa).

Position 27–32 (27–32) interacts with ATP; the sequence is SGGSDS.

Belongs to the tRNA(Ile)-lysidine synthase family.

It localises to the cytoplasm. It catalyses the reaction cytidine(34) in tRNA(Ile2) + L-lysine + ATP = lysidine(34) in tRNA(Ile2) + AMP + diphosphate + H(+). Ligates lysine onto the cytidine present at position 34 of the AUA codon-specific tRNA(Ile) that contains the anticodon CAU, in an ATP-dependent manner. Cytidine is converted to lysidine, thus changing the amino acid specificity of the tRNA from methionine to isoleucine. This Rickettsia bellii (strain OSU 85-389) protein is tRNA(Ile)-lysidine synthase.